The following is a 367-amino-acid chain: Alginate lyase (367 aa).

An N-terminal signal peptide occupies residues 1–24 (MTLLKRISSPALLALALFGGAAHA). Residues 63 to 64 (SK), 136 to 137 (HT), and Y254 contribute to the substrate site.

This sequence belongs to the polysaccharide lyase 5 family.

The protein localises to the periplasm. The catalysed reaction is Eliminative cleavage of alginate to give oligosaccharides with 4-deoxy-alpha-L-erythro-hex-4-enuronosyl groups at their non-reducing ends and beta-D-mannuronate at their reducing end.. Catalyzes the depolymerization of alginate by cleaving the beta-1,4 glycosidic bond between two adjacent sugar residues via a beta-elimination mechanism. May serve to degrade mislocalized alginate that is trapped in the periplasmic space. This is Alginate lyase from Pseudomonas putida (strain GB-1).